Here is a 1095-residue protein sequence, read N- to C-terminus: 1-phosphatidylinositol 4,5-bisphosphate phosphodiesterase (1095 aa).

The 151-residue stretch at 319–469 (MEMDQPLAHY…LKRKILIKNK (151 aa)) folds into the PI-PLC X-box domain. Residues H334 and H381 contribute to the active site. 2 residues coordinate substrate: K467 and K469. The tract at residues 487–529 (ELKTDDDPEEDASAGKPPEAAAAPAPAPEAAAAAEGAAEGGGG) is disordered. A compositionally biased stretch (low complexity) spans 500–523 (AGKPPEAAAAPAPAPEAAAAAEGA). The PI-PLC Y-box domain maps to 550 to 666 (LSSMVNYAQP…GYLLKPDFMR (117 aa)). S579 and R606 together coordinate substrate. The C2 domain occupies 666–794 (RRADKDFDPF…SLRTEANFPM (129 aa)). 2 disordered regions span residues 842-863 (IEEQ…EKKE) and 1000-1030 (QAKM…LREK). Basic and acidic residues-rich tracts occupy residues 852–863 (DAGKAKEEEKKE) and 1007–1030 (TAKE…LREK).

In terms of assembly, interacts with inaD. As to expression, abundantly expressed in the adult retina.

The enzyme catalyses a 1,2-diacyl-sn-glycero-3-phospho-(1D-myo-inositol-4,5-bisphosphate) + H2O = 1D-myo-inositol 1,4,5-trisphosphate + a 1,2-diacyl-sn-glycerol + H(+). In terms of biological role, the production of the second messenger molecules diacylglycerol (DAG) and inositol 1,4,5-trisphosphate (IP3) is mediated by activated phosphatidylinositol-specific phospholipase C enzymes. Essential component of the phototransduction pathway. Essential downstream component of a hh-signaling pathway which regulates the Duox-dependent gut immune response to bacterial uracil; required for the activation of Cad99C and consequently Cad99C-dependent endosome formation, which is essential for the Duox-dependent production of reactive oxygen species (ROS) in response to intestinal bacterial infection. This Drosophila melanogaster (Fruit fly) protein is 1-phosphatidylinositol 4,5-bisphosphate phosphodiesterase.